Here is an 83-residue protein sequence, read N- to C-terminus: Transmembrane protein EP84R (83 aa).

2 consecutive transmembrane segments (helical) span residues 31 to 51 and 59 to 79; these read IIGV…IIIL and TGSI…FLIY.

This sequence belongs to the asfivirus EP84R family.

Its subcellular location is the virion membrane. In Ornithodoros (relapsing fever ticks), this protein is Transmembrane protein EP84R.